Consider the following 118-residue polypeptide: NADH-quinone oxidoreductase subunit A 2 (118 aa).

3 helical membrane passes run 5–25 (YLPI…SLIF), 62–82 (IIAM…PWAV), and 87–107 (LGMF…VGYI).

Belongs to the complex I subunit 3 family. NDH-1 is composed of 14 different subunits. Subunits NuoA, H, J, K, L, M, N constitute the membrane sector of the complex.

The protein localises to the cell inner membrane. The catalysed reaction is a quinone + NADH + 5 H(+)(in) = a quinol + NAD(+) + 4 H(+)(out). Functionally, NDH-1 shuttles electrons from NADH, via FMN and iron-sulfur (Fe-S) centers, to quinones in the respiratory chain. The immediate electron acceptor for the enzyme in this species is believed to be ubiquinone. Couples the redox reaction to proton translocation (for every two electrons transferred, four hydrogen ions are translocated across the cytoplasmic membrane), and thus conserves the redox energy in a proton gradient. This is NADH-quinone oxidoreductase subunit A 2 from Geotalea uraniireducens (strain Rf4) (Geobacter uraniireducens).